Reading from the N-terminus, the 1382-residue chain is DNA-directed RNA polymerase subunit beta'' (1382 aa).

4 residues coordinate Zn(2+): Cys-224, Cys-294, Cys-301, and Cys-304.

Belongs to the RNA polymerase beta' chain family. RpoC2 subfamily. As to quaternary structure, in plastids the minimal PEP RNA polymerase catalytic core is composed of four subunits: alpha, beta, beta', and beta''. When a (nuclear-encoded) sigma factor is associated with the core the holoenzyme is formed, which can initiate transcription. Zn(2+) is required as a cofactor.

It is found in the plastid. It localises to the chloroplast. It carries out the reaction RNA(n) + a ribonucleoside 5'-triphosphate = RNA(n+1) + diphosphate. In terms of biological role, DNA-dependent RNA polymerase catalyzes the transcription of DNA into RNA using the four ribonucleoside triphosphates as substrates. This chain is DNA-directed RNA polymerase subunit beta'', found in Dioscorea elephantipes (Elephant's foot yam).